The primary structure comprises 325 residues: RepFIB replication protein A (325 aa).

A disordered region spans residues 279 to 298; the sequence is APNDESKENPLPPSPAEKVS.

The protein belongs to the initiator RepB protein family.

Functionally, this protein is essential for plasmid replication; it is involved in copy control functions. In vitro, binds to the DNA repeat units, BCDD'D'', EFG and HIJ. The polypeptide is RepFIB replication protein A (repA) (Escherichia coli).